The chain runs to 117 residues: Large ribosomal subunit protein uL18 (117 aa).

The protein belongs to the universal ribosomal protein uL18 family. Part of the 50S ribosomal subunit; part of the 5S rRNA/L5/L18/L25 subcomplex. Contacts the 5S and 23S rRNAs.

In terms of biological role, this is one of the proteins that bind and probably mediate the attachment of the 5S RNA into the large ribosomal subunit, where it forms part of the central protuberance. The polypeptide is Large ribosomal subunit protein uL18 (Cronobacter sakazakii (strain ATCC BAA-894) (Enterobacter sakazakii)).